A 304-amino-acid chain; its full sequence is Serine protease 30 (304 aa).

Positions 1 to 21 are cleaved as a signal peptide; the sequence is MESWARCIFLLLLQILTGGRG. Residues 22 to 30 constitute a propeptide, activation peptide; sequence DILHSGAGK. The 241-residue stretch at 31–271 folds into the Peptidase S1 domain; sequence IVGGQDAPEG…YVDWIQRTLA (241 aa). A disulfide bridge links Cys-57 with Cys-73. His-72 (charge relay system) is an active-site residue. An N-linked (GlcNAc...) asparagine glycan is attached at Asn-79. The active-site Charge relay system is the Asp-122. 3 cysteine pairs are disulfide-bonded: Cys-155–Cys-229, Cys-185–Cys-208, and Cys-219–Cys-247. The active-site Charge relay system is Ser-223. Asn-232 and Asn-273 each carry an N-linked (GlcNAc...) asparagine glycan. Residue Ser-275 is the site of GPI-anchor amidated serine attachment. A propeptide spans 276 to 304 (removed in mature form); the sequence is DAYGCRSRASGAYPALLLVLLAFALPESL.

This sequence belongs to the peptidase S1 family. As to expression, expressed predominantly in kidney, small intestine and stomach and moderately in thymus, lung, spleen, testis and skin. In the kidney, expressed mainly in collecting duct of renal medulla and cortex.

The protein localises to the cell membrane. Its activity is regulated as follows. Inhibited by aprotinin, leupeptin, benzamidine and soybean trypsin inhibitor. Partially inhibited by PMSF and DFP. Selectively cleaves synthetic peptide substrates of trypsin. Activates the epithelial sodium channel ENaC. In Rattus norvegicus (Rat), this protein is Serine protease 30 (Prss30).